A 462-amino-acid polypeptide reads, in one-letter code: Gamma-aminobutyric acid receptor subunit alpha-5 (462 aa).

An N-terminal signal peptide occupies residues 1–31 (MDNGMFSSFIMIKNLLLFCISMNLASHFGFS). Residues 32-260 (QMPTSSVKAE…FHLKRKIGYF (229 aa)) lie on the Extracellular side of the membrane. An N-linked (GlcNAc...) asparagine glycan is attached at N45. 4-aminobutanoate is bound at residue R101. N145 is a glycosylation site (N-linked (GlcNAc...) asparagine). T164 serves as a coordination point for 4-aminobutanoate. An intrachain disulfide couples C173 to C187. Residues N207 and N236 are each glycosylated (N-linked (GlcNAc...) asparagine). 3 consecutive transmembrane segments (helical) span residues 261–281 (VIQT…SFWL), 287–308 (PART…ISAR), and 319–340 (AMDW…EFAT). Topologically, residues 341-427 (VNYFTKRGWA…TYNSISKIDK (87 aa)) are cytoplasmic. A Glycyl lysine isopeptide (Lys-Gly) (interchain with G-Cter in ubiquitin) cross-link involves residue K355. The segment at 375-412 (TNAYTTGKMTHPPNIPKEQTPAGTTNASSASVKPEDKA) is disordered. The span at 395 to 405 (PAGTTNASSAS) shows a compositional bias: polar residues. A helical transmembrane segment spans residues 428-448 (MSRIIFPLLFGTFNLVYWATY).

This sequence belongs to the ligand-gated ion channel (TC 1.A.9) family. Gamma-aminobutyric acid receptor (TC 1.A.9.5) subfamily. GABRA5 sub-subfamily. As to quaternary structure, heteropentamer, formed by a combination of alpha (GABRA1-6), beta (GABRB1-3), gamma (GABRG1-3), delta (GABRD), epsilon (GABRE), rho (GABRR1-3), pi (GABRP) and theta (GABRQ) chains, each subunit exhibiting distinct physiological and pharmacological properties.

It is found in the postsynaptic cell membrane. Its subcellular location is the cell membrane. It carries out the reaction chloride(in) = chloride(out). Functionally, alpha subunit of the heteropentameric ligand-gated chloride channel gated by gamma-aminobutyric acid (GABA), a major inhibitory neurotransmitter in the brain. GABA-gated chloride channels, also named GABA(A) receptors (GABAAR), consist of five subunits arranged around a central pore and contain GABA active binding site(s) located at the alpha and beta subunit interface(s). When activated by GABA, GABAARs selectively allow the flow of chloride anions across the cell membrane down their electrochemical gradient. GABAARs containing alpha-5/GABRA5 subunits are mainly extrasynaptic and contribute to the tonic GABAergic inhibition in the hippocampus. Extrasynaptic alpha-5-containing GABAARs in CA1 pyramidal neurons play a role in learning and memory processes. In Bos taurus (Bovine), this protein is Gamma-aminobutyric acid receptor subunit alpha-5 (GABRA5).